We begin with the raw amino-acid sequence, 277 residues long: MAMKGPGLFSDIGKRAKDLLTKDYTYDQKLTVSTVSSSGVGLTSTAVKKGGLYTLDVSSVYKYKSTLVDVKVDTESNISTTLTVFDVLPSTKLVTSVKLPDYNSGKVEMQYFHENASFATAVGMKPSPVVEFSGTAGAQGLAFGAEAGFDTATGKFTKYSAAIGVTKPDYHAAIVLADKGDTVKVSGVYHLDDKQKSSVVAELTRRLSTNENTLTVGGLYKVDPETAVKARLNNTGKLAALLQHEVKPKSVLTISGEFDTKALDRPPKFGLALALRP.

This sequence belongs to the eukaryotic mitochondrial porin (TC 1.B.8.1) family.

The protein localises to the mitochondrion outer membrane. Functionally, forms a channel through the mitochondrial outer membrane that allows diffusion of small hydrophilic molecules. The channel adopts an open conformation at low or zero membrane potential and a closed conformation at potentials above 30-40 mV. The open state has a weak anion selectivity whereas the closed state is cation-selective. In Oryza sativa subsp. japonica (Rice), this protein is Mitochondrial outer membrane protein porin 5 (VDAC5).